Here is a 465-residue protein sequence, read N- to C-terminus: MSNKMWGGRFTDRPDAIMEEINVSIDVDRHLYAQDIAASKAHAAMLAAQGIITANDAKNIGKGLDTILSEIGAGKFTFKRALEDIHMNVESRLAELIGPAAGRLHTARSRNDQVATDFRLYVRDVLDETDAALAAFQFALAERALEQADTVMPGFTHLQTAQPVTFGHHLMAYVEMAARDRGRFQDARKRLNESPLGAAALAGTSFPIDRHATAQKLGFVRPMANSLDAVSDRDFVLETLSAASICAVHLSRFAEEIVIWTSPLVGLIRLSDKFTTGSSIMPQKRNPDAAELVRAKTGRVIGALNGLLIVMKGLPLAYQKDMQEDKQGAMEGFAALSLAIRAMTGMVRDLVPEHDRMRAAAGEGYATATDLADWLVRTLKMPFRDAHHVTGRIVGLAAKQGLALHELPLAEMQAVEKRITRDALAVLSVESSVKSRTSYGGTAPKNVRAQAKAWLKRLEKERKLG.

The protein belongs to the lyase 1 family. Argininosuccinate lyase subfamily.

It is found in the cytoplasm. It carries out the reaction 2-(N(omega)-L-arginino)succinate = fumarate + L-arginine. Its pathway is amino-acid biosynthesis; L-arginine biosynthesis; L-arginine from L-ornithine and carbamoyl phosphate: step 3/3. The sequence is that of Argininosuccinate lyase from Rhodopseudomonas palustris (strain HaA2).